The sequence spans 270 residues: Shikimate dehydrogenase (NADP(+)) (270 aa).

Shikimate-binding positions include 15–17 and T62; that span reads SKS. The Proton acceptor role is filled by K66. Positions 87 and 102 each coordinate shikimate. Residues 127–131, 151–156, and M214 contribute to the NADP(+) site; these read GAGGA and NRTVAR. Shikimate is bound at residue Y216. G238 lines the NADP(+) pocket.

This sequence belongs to the shikimate dehydrogenase family. In terms of assembly, homodimer.

It carries out the reaction shikimate + NADP(+) = 3-dehydroshikimate + NADPH + H(+). It participates in metabolic intermediate biosynthesis; chorismate biosynthesis; chorismate from D-erythrose 4-phosphate and phosphoenolpyruvate: step 4/7. Functionally, involved in the biosynthesis of the chorismate, which leads to the biosynthesis of aromatic amino acids. Catalyzes the reversible NADPH linked reduction of 3-dehydroshikimate (DHSA) to yield shikimate (SA). This is Shikimate dehydrogenase (NADP(+)) from Alkalilimnicola ehrlichii (strain ATCC BAA-1101 / DSM 17681 / MLHE-1).